Consider the following 239-residue polypeptide: Ribonuclease PH (239 aa).

Phosphate is bound by residues arginine 86 and 124–126 (GTR).

Belongs to the RNase PH family. In terms of assembly, homohexameric ring arranged as a trimer of dimers.

The catalysed reaction is tRNA(n+1) + phosphate = tRNA(n) + a ribonucleoside 5'-diphosphate. Its function is as follows. Phosphorolytic 3'-5' exoribonuclease that plays an important role in tRNA 3'-end maturation. Removes nucleotide residues following the 3'-CCA terminus of tRNAs; can also add nucleotides to the ends of RNA molecules by using nucleoside diphosphates as substrates, but this may not be physiologically important. Probably plays a role in initiation of 16S rRNA degradation (leading to ribosome degradation) during starvation. This chain is Ribonuclease PH, found in Anaeromyxobacter dehalogenans (strain 2CP-1 / ATCC BAA-258).